Reading from the N-terminus, the 113-residue chain is ATP-dependent Clp protease adapter protein ClpS (113 aa).

This sequence belongs to the ClpS family. In terms of assembly, binds to the N-terminal domain of the chaperone ClpA.

In terms of biological role, involved in the modulation of the specificity of the ClpAP-mediated ATP-dependent protein degradation. In Leptospira biflexa serovar Patoc (strain Patoc 1 / Ames), this protein is ATP-dependent Clp protease adapter protein ClpS.